Reading from the N-terminus, the 332-residue chain is MSTPEVVREVQSLETYNPLAKQKAAAKLSRIPVKVVQGEILKKPDWIRVKAGSPSTRFYEIKQILRENKLNTVCEEASCPNIGECFGKGTATFMIMGDKCTRRCPFCDVGHGRPDPLDADEPLNLARTIAALKLKYVVITSVDRDDLRDGGSGHFVECIQRIRELSPGTTIEVLVPDFRGRDDRALEILKTSPPDVMNHNLETAPRLYKEARPGSDYQFSLNLLKKFKALHPDVPTKSGIMVGLGETDEEILQVMQDMRDHGINMLTIGQYLAPSTSHLPVRRYVHPDTFKMFEEKAYEMGFSHAAVGAMVRSSYHADQQAHAAGVSDKPAE.

[4Fe-4S] cluster is bound by residues Cys74, Cys79, Cys85, Cys100, Cys104, Cys107, and Ser314. One can recognise a Radical SAM core domain in the interval 85–303 (CFGKGTATFM…EEKAYEMGFS (219 aa)).

This sequence belongs to the radical SAM superfamily. Lipoyl synthase family. It depends on [4Fe-4S] cluster as a cofactor.

The protein resides in the cytoplasm. The enzyme catalyses [[Fe-S] cluster scaffold protein carrying a second [4Fe-4S](2+) cluster] + N(6)-octanoyl-L-lysyl-[protein] + 2 oxidized [2Fe-2S]-[ferredoxin] + 2 S-adenosyl-L-methionine + 4 H(+) = [[Fe-S] cluster scaffold protein] + N(6)-[(R)-dihydrolipoyl]-L-lysyl-[protein] + 4 Fe(3+) + 2 hydrogen sulfide + 2 5'-deoxyadenosine + 2 L-methionine + 2 reduced [2Fe-2S]-[ferredoxin]. Its pathway is protein modification; protein lipoylation via endogenous pathway; protein N(6)-(lipoyl)lysine from octanoyl-[acyl-carrier-protein]: step 2/2. In terms of biological role, catalyzes the radical-mediated insertion of two sulfur atoms into the C-6 and C-8 positions of the octanoyl moiety bound to the lipoyl domains of lipoate-dependent enzymes, thereby converting the octanoylated domains into lipoylated derivatives. This is Lipoyl synthase from Polaromonas naphthalenivorans (strain CJ2).